The sequence spans 596 residues: Capsid protein VP1 (596 aa).

This sequence belongs to the microviridae F protein family.

The protein resides in the virion. It is found in the host cytoplasm. Functionally, assembles to form an icosahedral capsid with a T=1 symmetry. The protein is Capsid protein VP1 of Chlamydia phage 1 (Bacteriophage Chp1).